The primary structure comprises 150 residues: 3-dehydroquinate dehydratase (150 aa).

Tyrosine 22 functions as the Proton acceptor in the catalytic mechanism. The substrate site is built by asparagine 73, histidine 79, and aspartate 86. The Proton donor role is filled by histidine 99. Substrate is bound by residues 100–101 (LS) and arginine 110.

The protein belongs to the type-II 3-dehydroquinase family. Homododecamer.

It catalyses the reaction 3-dehydroquinate = 3-dehydroshikimate + H2O. The protein operates within metabolic intermediate biosynthesis; chorismate biosynthesis; chorismate from D-erythrose 4-phosphate and phosphoenolpyruvate: step 3/7. Its function is as follows. Catalyzes a trans-dehydration via an enolate intermediate. The protein is 3-dehydroquinate dehydratase of Dinoroseobacter shibae (strain DSM 16493 / NCIMB 14021 / DFL 12).